Reading from the N-terminus, the 518-residue chain is Chromosomal replication initiator protein DnaA (518 aa).

The segment at 1 to 76 (METDGGDFPS…RALSEAYGSP (76 aa)) is domain I, interacts with DnaA modulators. Positions 76–176 (PIRLAVTVDP…RRPTTRIENS (101 aa)) are domain II. The segment at 91-174 (LTPERTGEHS…QPRRPTTRIE (84 aa)) is disordered. A compositionally biased stretch (basic and acidic residues) spans 124 to 135 (DGLHLDERRSGS). Acidic residues predominate over residues 136-147 (LEEDSPLDDSDP). Positions 177–393 (RLNPKYIFET…GALIRVTAFA (217 aa)) are domain III, AAA+ region. The ATP site is built by Gly221, Gly223, Lys224, and Thr225. A domain IV, binds dsDNA region spans residues 394–518 (SLNRQPVDMQ…TNRIKKQSGA (125 aa)).

The protein belongs to the DnaA family. In terms of assembly, oligomerizes as a right-handed, spiral filament on DNA at oriC.

Its subcellular location is the cytoplasm. Plays an essential role in the initiation and regulation of chromosomal replication. ATP-DnaA binds to the origin of replication (oriC) to initiate formation of the DNA replication initiation complex once per cell cycle. Binds the DnaA box (a 9 base pair repeat at the origin) and separates the double-stranded (ds)DNA. Forms a right-handed helical filament on oriC DNA; dsDNA binds to the exterior of the filament while single-stranded (ss)DNA is stabiized in the filament's interior. The ATP-DnaA-oriC complex binds and stabilizes one strand of the AT-rich DNA unwinding element (DUE), permitting loading of DNA polymerase. After initiation quickly degrades to an ADP-DnaA complex that is not apt for DNA replication. Binds acidic phospholipids. The sequence is that of Chromosomal replication initiator protein DnaA from Kineococcus radiotolerans (strain ATCC BAA-149 / DSM 14245 / SRS30216).